The primary structure comprises 875 residues: Peptidyl-glycine alpha-amidating monooxygenase B (875 aa).

A signal peptide spans 1–39 (MDMASLISSLLVLFLIFQNSCYCFRSPLSVFKRYEESTR). The peptidylglycine alpha-hydroxylating monooxygenase stretch occupies residues 3–394 (MASLISSLLV…KREEEEVLNQ (392 aa)). Topologically, residues 40 to 763 (SLSNDCLGTT…PSVVQESSAG (724 aa)) are intragranular. Cystine bridges form between Cys-45/Cys-184, Cys-79/Cys-124, Cys-112/Cys-129, Cys-225/Cys-332, and Cys-291/Cys-313. Cu(2+) contacts are provided by His-105 and His-106. Cu(2+) contacts are provided by His-170, His-240, His-242, and Met-312. The interval 395 to 716 (DVHLEEDTDW…SPSKAEHRSV (322 aa)) is peptidyl-alpha-hydroxyglycine alpha-amidating lyase. Arg-430 is an a protein binding site. Asn-465 carries an N-linked (GlcNAc...) asparagine glycan. NHL repeat units lie at residues 467–508 (SKVL…VGAE), 516–561 (LGRA…FSPN), and 569–613 (GEET…FHAK). 2 disulfides stabilise this stretch: Cys-530-Cys-551 and Cys-598-Cys-609. Tyr-550 and Arg-602 together coordinate a protein. Residue Asn-662 is glycosylated (N-linked (GlcNAc...) asparagine). One copy of the NHL 4 repeat lies at 666-709 (GDILDTFIPARKNFEMPHDIAAGDDGTVYVGDAHANAVWKFSPS). A disordered region spans residues 735–755 (HMRSRPKTNESVGQQTQEKPS). A glycan (N-linked (GlcNAc...) asparagine) is linked at Asn-743. Positions 743–755 (NESVGQQTQEKPS) are enriched in polar residues. A helical transmembrane segment spans residues 764 to 787 (VSFVLIITLLIIPVVVLIAIAIFI). Residues 788–875 (RWRKVRMYGG…APPIPPVSSS (88 aa)) lie on the Cytoplasmic side of the membrane. The tract at residues 837-875 (KGFDRLSTEGSDQEKDDDDDGSDSEEEYSAPPIPPVSSS) is disordered. Residues 850–864 (EKDDDDDGSDSEEEY) show a composition bias toward acidic residues.

In the C-terminal section; belongs to the peptidyl-alpha-hydroxyglycine alpha-amidating lyase family. This sequence in the N-terminal section; belongs to the copper type II ascorbate-dependent monooxygenase family. As to quaternary structure, monomer. Requires Zn(2+) as cofactor. Cu(2+) serves as cofactor.

It localises to the cytoplasmic vesicle. The protein localises to the secretory vesicle membrane. It catalyses the reaction a [peptide]-C-terminal glycine + 2 L-ascorbate + O2 = a [peptide]-C-terminal (2S)-2-hydroxyglycine + 2 monodehydro-L-ascorbate radical + H2O. It carries out the reaction a [peptide]-C-terminal (2S)-2-hydroxyglycine = a [peptide]-C-terminal amide + glyoxylate. In terms of biological role, bifunctional enzyme that catalyzes amidation of the C-terminus of proteins. Alpha-amidation is present at the C-terminus of many endocrine hormones and neuropeptides and is required for their activity. C-terminal amidation also takes place in response to protein fragmentation triggered by oxidative stress, promoting degradation of amidated protein fragments by the proteasome. Alpha-amidation involves two sequential reactions, both of which are catalyzed by separate catalytic domains of the enzyme. The first step, catalyzed by peptidyl alpha-hydroxylating monooxygenase (PHM) domain, is the copper-, ascorbate-, and O2- dependent stereospecific hydroxylation (with S stereochemistry) at the alpha-carbon (C-alpha) of the C-terminal glycine of the peptidylglycine substrate. The second step, catalyzed by the peptidylglycine amidoglycolate lyase (PAL) domain, is the zinc-dependent cleavage of the N-C-alpha bond, producing the alpha-amidated peptide and glyoxylate. This chain is Peptidyl-glycine alpha-amidating monooxygenase B (pam-b), found in Xenopus laevis (African clawed frog).